We begin with the raw amino-acid sequence, 203 residues long: ATP-dependent Clp protease proteolytic subunit 2 (203 aa).

S98 functions as the Nucleophile in the catalytic mechanism. The active site involves H123.

The protein belongs to the peptidase S14 family. As to quaternary structure, fourteen ClpP subunits assemble into 2 heptameric rings which stack back to back to give a disk-like structure with a central cavity, resembling the structure of eukaryotic proteasomes.

It is found in the cytoplasm. The enzyme catalyses Hydrolysis of proteins to small peptides in the presence of ATP and magnesium. alpha-casein is the usual test substrate. In the absence of ATP, only oligopeptides shorter than five residues are hydrolyzed (such as succinyl-Leu-Tyr-|-NHMec, and Leu-Tyr-Leu-|-Tyr-Trp, in which cleavage of the -Tyr-|-Leu- and -Tyr-|-Trp bonds also occurs).. Its function is as follows. Cleaves peptides in various proteins in a process that requires ATP hydrolysis. Has a chymotrypsin-like activity. Plays a major role in the degradation of misfolded proteins. The sequence is that of ATP-dependent Clp protease proteolytic subunit 2 from Chlamydia trachomatis serovar A (strain ATCC VR-571B / DSM 19440 / HAR-13).